Reading from the N-terminus, the 331-residue chain is MAASSTATRLSPPRLHAPTTPSPHLPLRRSRFSPLRAAKLEAVLTIGTHLIPHPRKAETGGEDAFFVNGDDGGVFAVADGVSGWAEKDVNPALFSRELMAHTSTFLKDEEVNHDPQLLLMKAHAATTSVGSATVIIAMLEKTGILKIASVGDCGLKVIRKGQVMFSTCPQEHYFDCPYQLSSEAIGQTYLDALVCTVNLMEGDMIVSGSDGFFDNIFDQEIVSVISESPGVDEAAKALAELARKHSVDVTFDSPYSMEARSRGFDVPSWKKFIGGKLIGGKMDDITVIVAQVKAVMIPDDEGVDEEKGQGDEQGSAVAVASSEQKEDSITT.

The segment at 1-29 is disordered; the sequence is MAASSTATRLSPPRLHAPTTPSPHLPLRR. One can recognise a PPM-type phosphatase domain in the interval 48–292; the sequence is THLIPHPRKA…DDITVIVAQV (245 aa). 4 residues coordinate Mn(2+): aspartate 79, glycine 80, aspartate 210, and aspartate 283. The tract at residues 300 to 331 is disordered; it reads DEGVDEEKGQGDEQGSAVAVASSEQKEDSITT.

This sequence belongs to the PP2C family. Requires Mg(2+) as cofactor. Mn(2+) serves as cofactor.

It catalyses the reaction O-phospho-L-seryl-[protein] + H2O = L-seryl-[protein] + phosphate. The enzyme catalyses O-phospho-L-threonyl-[protein] + H2O = L-threonyl-[protein] + phosphate. The chain is Probable protein phosphatase 2C 1 from Oryza sativa subsp. japonica (Rice).